A 159-amino-acid polypeptide reads, in one-letter code: Peptide methionine sulfoxide reductase MsrB (159 aa).

A MsrB domain is found at 14 to 137; sequence TEKLKENLTE…NSASLKFIAK (124 aa). Cys126 functions as the Nucleophile in the catalytic mechanism.

The protein belongs to the MsrB Met sulfoxide reductase family.

It carries out the reaction L-methionyl-[protein] + [thioredoxin]-disulfide + H2O = L-methionyl-(R)-S-oxide-[protein] + [thioredoxin]-dithiol. This chain is Peptide methionine sulfoxide reductase MsrB, found in Hathewaya histolytica (Clostridium histolyticum).